The primary structure comprises 387 residues: Acyl-CoA dehydrogenase FadE29 (387 aa).

FAD-binding positions include 123 to 126, T132, and T158; that span reads IGYT. Residue E241 is the Proton acceptor of the active site. Residue 367–369 coordinates FAD; that stretch reads VNE.

This sequence belongs to the acyl-CoA dehydrogenase family. In terms of assembly, heterotetramer composed of FadE28 and FadE29. FAD is required as a cofactor.

It carries out the reaction 3-oxochol-4-en-22-oyl-CoA + A = 3-oxochola-4,17-dien-22-oyl-CoA + AH2. The protein operates within steroid metabolism; cholesterol degradation. Functionally, involved in the third cycle of side chain dehydrogenation in the beta-oxidation of cholesterol catabolism. Contributes partly to the virulence by increasing the efficiency of beta-oxidation. Catalyzes the dehydrogenation of 2'-propanoyl-CoA ester side chains of 3-oxo-4-pregnene-20-carboxyl-CoA (3-OPC-CoA) to yield 3-oxo-4,17-pregnadiene-20-carboxyl-CoA (3-OPDC-CoA). Also able to dehydrogenate steroyl-CoA such as 3-oxo-chol-4-en-24-oyl-CoA (3-OCO-CoA), 1beta-(2'-propanoyl-CoA)-3a-alpha-H- 7a-beta-methylhexahydro-4-indanone (indanone-CoA ester), hexahydroindanone and pregenenone. The sequence is that of Acyl-CoA dehydrogenase FadE29 (fadE29) from Mycobacterium tuberculosis (strain ATCC 25618 / H37Rv).